We begin with the raw amino-acid sequence, 390 residues long: Succinyl-diaminopimelate desuccinylase (390 aa).

Position 74 (His-74) interacts with Zn(2+). Asp-76 is an active-site residue. Asp-107 provides a ligand contact to Zn(2+). Glu-140 functions as the Proton acceptor in the catalytic mechanism. Zn(2+) contacts are provided by Glu-141, Glu-169, and His-363.

This sequence belongs to the peptidase M20A family. DapE subfamily. Homodimer. Requires Zn(2+) as cofactor. Co(2+) serves as cofactor.

It catalyses the reaction N-succinyl-(2S,6S)-2,6-diaminopimelate + H2O = (2S,6S)-2,6-diaminopimelate + succinate. Its pathway is amino-acid biosynthesis; L-lysine biosynthesis via DAP pathway; LL-2,6-diaminopimelate from (S)-tetrahydrodipicolinate (succinylase route): step 3/3. Catalyzes the hydrolysis of N-succinyl-L,L-diaminopimelic acid (SDAP), forming succinate and LL-2,6-diaminopimelate (DAP), an intermediate involved in the bacterial biosynthesis of lysine and meso-diaminopimelic acid, an essential component of bacterial cell walls. This is Succinyl-diaminopimelate desuccinylase from Bartonella henselae (strain ATCC 49882 / DSM 28221 / CCUG 30454 / Houston 1) (Rochalimaea henselae).